A 93-amino-acid chain; its full sequence is Small ribosomal subunit protein bS18 (93 aa).

This sequence belongs to the bacterial ribosomal protein bS18 family. Part of the 30S ribosomal subunit. Forms a tight heterodimer with protein bS6.

Its function is as follows. Binds as a heterodimer with protein bS6 to the central domain of the 16S rRNA, where it helps stabilize the platform of the 30S subunit. This Delftia acidovorans (strain DSM 14801 / SPH-1) protein is Small ribosomal subunit protein bS18.